A 410-amino-acid chain; its full sequence is BRCA1-A complex subunit Abraxas 1 (410 aa).

Positions 7-160 (TAVLSGFVLG…HALYKPQKGL (154 aa)) constitute an MPN domain. Ser-48 is modified (phosphoserine). A coiled-coil region spans residues 208 to 261 (SLKEVQKINEMYTSLQDELKSICEKVEHSERAVEKLLNDVNRLKGEIKKRKQAQ). The tract at residues 354 to 410 (DGWQFKKSRLGGIQNRPSKTDTNSSNQEQASTVSSPETDEEIERMKGSGEYPQSPTF) is disordered. Residues 368–389 (NRPSKTDTNSSNQEQASTVSSP) show a composition bias toward polar residues. Ser-387 and Ser-388 each carry phosphoserine. Thr-391 bears the Phosphothreonine mark. The residue at position 407 (Ser-407) is a Phosphoserine. A pSXXF motif motif is present at residues 407–410 (SPTF).

This sequence belongs to the FAM175 family. Abraxas subfamily. Component of the ARISC complex, at least composed of UIMC1/RAP80, ABRAXAS1, BRCC3/BRCC36, BABAM2 and BABAM1/NBA1. Component of the BRCA1-A complex, at least composed of the BRCA1, BARD1, UIMC1/RAP80, ABRAXAS1, BRCC3/BRCC36, BABAM2 and BABAM1/NBA1. In the complex, interacts directly with UIMC1/RAP80, BRCC3/BRCC36 and BABAM2. Homodimer. Interacts directly (when phosphorylated at Ser-407) with BRCA1. The phosphorylated homodimer can interact directly with two BRCA1 chains, giving rise to a heterotetramer. Binds polyubiquitin. In terms of processing, phosphorylation of Ser-407 of the pSXXF motif by ATM or ATR constitutes a specific recognition motif for the BRCT domain of BRCA1.

Its subcellular location is the nucleus. In terms of biological role, involved in DNA damage response and double-strand break (DSB) repair. Component of the BRCA1-A complex, acting as a central scaffold protein that assembles the various components of the complex and mediates the recruitment of BRCA1. The BRCA1-A complex specifically recognizes 'Lys-63'-linked ubiquitinated histones H2A and H2AX at DNA lesion sites, leading to target the BRCA1-BARD1 heterodimer to sites of DNA damage at DSBs. This complex also possesses deubiquitinase activity that specifically removes 'Lys-63'-linked ubiquitin on histones H2A and H2AX. This Bos taurus (Bovine) protein is BRCA1-A complex subunit Abraxas 1.